The sequence spans 55 residues: Lantibiotic epilancin (55 aa).

Positions 1 to 24 (MNNSLFDLNLNKGVETQKSDLSPQ) are cleaved as a propeptide — cleaved by ElxP. Ser25 carries the D-lactate; by the dehydratase ElxB and the dehydrogenase ElxO modification. The residue at position 27 (Ser27) is a 2,3-didehydroalanine (Ser); by the dehydratase ElxB. Thr31 is modified (2,3-didehydrobutyrine; by the dehydratase ElxB). Ser32 carries the 2,3-didehydroalanine (Ser); by the dehydratase ElxB modification. A cross-link (lanthionine (Ser-Cys); by the dehydratase ElxB and the cyclase ElxC) is located at residues 36-40 (SKKYC). Cross-links (beta-methyllanthionine (Thr-Cys); by the dehydratase ElxB and the cyclase ElxC) lie at residues 44–47 (TLTC) and 46–49 (TCGC). The residue at position 52 (Thr52) is a 2,3-didehydrobutyrine; by the dehydratase ElxB.

Belongs to the type A lantibiotic family. In terms of processing, maturation of this lantibiotic involves the enzymatic conversion of Thr, and Ser into dehydrated AA by ElxB and the formation of thioether bonds with cysteine by the cyclase ElxC. The next steps are cleavage of the leader peptide by ElxP and membrane translocation by ElxT. The leader peptide may be removed before membrane translocation, in contrast to other lantibiotics for which the cleavage occur after translocation. This is suggested by the probable cytoplasmic localization of the serine protease ElxP that cleaves the leader peptide. Post-translationally, it is not established whether the 2,3-didehydrobutyrine is the E- or Z-isomer. The N-terminal D-lactate is probably produced by dehydration of Ser-25 by ElxB, followed by proteolytic removal of the leader peptide by the serine protease ElxP and hydrolysis of the resulting new N-terminal dehydroalanine. This hydrolysis may occur spontaneously. The pyruvate group thus formed is reduced to D-lactate by the NADPH-dependent oxidoreductase ElxO. This N-terminal D-lactate protects the lantibiotic against degradation against aminopeptidase.

Lanthionine-containing peptide antibiotic (lantibiotic) active on Gram-positive bacteria such as staphylococci, enterococci and streptococci. The bactericidal activity of lantibiotics is based on depolarization of energized bacterial cytoplasmic membranes, initiated by the formation of aqueous transmembrane pores. The chain is Lantibiotic epilancin (elkA) from Staphylococcus epidermidis.